Here is a 255-residue protein sequence, read N- to C-terminus: NAD kinase (255 aa).

The active-site Proton acceptor is the Asp-44. NAD(+)-binding positions include 44 to 45 (DG), 114 to 115 (NE), Asp-144, Ala-152, and 155 to 160 (TAYNLS).

This sequence belongs to the NAD kinase family. Requires a divalent metal cation as cofactor.

The protein resides in the cytoplasm. It catalyses the reaction NAD(+) + ATP = ADP + NADP(+) + H(+). In terms of biological role, involved in the regulation of the intracellular balance of NAD and NADP, and is a key enzyme in the biosynthesis of NADP. Catalyzes specifically the phosphorylation on 2'-hydroxyl of the adenosine moiety of NAD to yield NADP. The sequence is that of NAD kinase from Hyphomonas neptunium (strain ATCC 15444).